Reading from the N-terminus, the 136-residue chain is MARTKQTARKSTGGKAPRKQLATKAAAKSAPATGGVKKPHRYRPGTVALREIRRYQKSTELLIRKLPFQRLVREIAQDFKTDLRFQSSAVLALQEASEAYLVGLFEDTNLCAIHAKRVTIMPKDIQLARRIRGERA.

The interval 1–42 (MARTKQTARKSTGGKAPRKQLATKAAAKSAPATGGVKKPHRY) is disordered. Residue Lys-5 is modified to N6-methylated lysine. N6-acetyllysine; alternate is present on Lys-10. Position 10 is an N6-methylated lysine; alternate (Lys-10). A Phosphoserine modification is found at Ser-11. Residues Lys-15 and Lys-24 each carry the N6-acetyllysine modification. The span at 22–33 (ATKAAAKSAPAT) shows a compositional bias: low complexity. Lys-28, Lys-37, and Lys-80 each carry N6-methylated lysine.

It belongs to the histone H3 family. The nucleosome is a histone octamer containing two molecules each of H2A, H2B, H3 and H4 assembled in one H3-H4 heterotetramer and two H2A-H2B heterodimers. The octamer wraps approximately 147 bp of DNA. In terms of processing, acetylation is generally linked to gene activation. Post-translationally, methylation at Lys-5 is linked to gene activation. Methylation at Lys-10 is linked to gene repression.

Its subcellular location is the nucleus. The protein resides in the chromosome. Core component of nucleosome. Nucleosomes wrap and compact DNA into chromatin, limiting DNA accessibility to the cellular machineries which require DNA as a template. Histones thereby play a central role in transcription regulation, DNA repair, DNA replication and chromosomal stability. DNA accessibility is regulated via a complex set of post-translational modifications of histones, also called histone code, and nucleosome remodeling. The protein is Histone H3 of Acropora formosa (Staghorn coral).